A 357-amino-acid polypeptide reads, in one-letter code: Protein RecA (357 aa).

79–86 (GPESSGKT) contributes to the ATP binding site.

The protein belongs to the RecA family.

It localises to the cytoplasm. Can catalyze the hydrolysis of ATP in the presence of single-stranded DNA, the ATP-dependent uptake of single-stranded DNA by duplex DNA, and the ATP-dependent hybridization of homologous single-stranded DNAs. It interacts with LexA causing its activation and leading to its autocatalytic cleavage. The sequence is that of Protein RecA from Chloroherpeton thalassium (strain ATCC 35110 / GB-78).